An 82-amino-acid polypeptide reads, in one-letter code: CLAVATA3/ESR (CLE)-related protein 53 (82 aa).

The N-terminal stretch at 1 to 26 (MATSTNSREFLIFICVLTLLVVRSEA) is a signal peptide. Hydroxyproline occurs at positions 74 and 77. A glycan (O-linked (Ara...) hydroxyproline) is linked at Pro-77.

It belongs to the CLV3/ESR signal peptide family. The O-glycosylation (arabinosylation) of the hydroxyproline Pro-77 enhances binding affinity of the CLE53p peptide for its receptor. As to expression, expressed in root vasculature.

The protein resides in the secreted. It localises to the extracellular space. Functionally, signaling peptide involved in the regulation of root colonization by arbuscular mycorrhizal (AM) fungi. Moves from root to shoot to function with the receptor kinase SUNN, in a signaling pathway that repress strigolactone biosynthetic genes and strigolactone content in the roots, and consequently reduces the promotion of further colonization by AM fungi. This chain is CLAVATA3/ESR (CLE)-related protein 53, found in Medicago truncatula (Barrel medic).